The primary structure comprises 521 residues: Type-1 glutamine synthetase 2 (521 aa).

One can recognise a GS beta-grasp domain in the interval 76–176 (NQIKISKSPF…FLMDFIGTNG (101 aa)). The 339-residue stretch at 183–521 (PRSTLKKVIK…WELERYLEII (339 aa)) folds into the GS catalytic domain.

This sequence belongs to the glutamine synthetase family.

The catalysed reaction is L-glutamate + NH4(+) + ATP = L-glutamine + ADP + phosphate + H(+). The sequence is that of Type-1 glutamine synthetase 2 (glnA2) from Dictyostelium discoideum (Social amoeba).